A 319-amino-acid chain; its full sequence is Glucokinase (319 aa).

8–13 (GDIGGT) contributes to the ATP binding site.

It belongs to the bacterial glucokinase family.

It is found in the cytoplasm. The catalysed reaction is D-glucose + ATP = D-glucose 6-phosphate + ADP + H(+). The chain is Glucokinase from Chromohalobacter salexigens (strain ATCC BAA-138 / DSM 3043 / CIP 106854 / NCIMB 13768 / 1H11).